The sequence spans 202 residues: Holliday junction resolvase RecU (202 aa).

Residues T85, D87, E100, and Q119 each contribute to the Mg(2+) site.

This sequence belongs to the RecU family. The cofactor is Mg(2+).

The protein resides in the cytoplasm. It carries out the reaction Endonucleolytic cleavage at a junction such as a reciprocal single-stranded crossover between two homologous DNA duplexes (Holliday junction).. Functionally, endonuclease that resolves Holliday junction intermediates in genetic recombination. Cleaves mobile four-strand junctions by introducing symmetrical nicks in paired strands. Promotes annealing of linear ssDNA with homologous dsDNA. Required for DNA repair, homologous recombination and chromosome segregation. This is Holliday junction resolvase RecU from Streptococcus equi subsp. zooepidemicus (strain MGCS10565).